A 338-amino-acid chain; its full sequence is MANRANRHAARTEDSDNTINYVQCDGLAVMKMVKHCHEESSNMDLAQGALLGLVVDKCLEITNCFPFPKSGDETMDEEMYQLTVMRRLRRVNVDHLHVGWYQSSDVGNSLSLALLESQYHYQTSIEESVVVVYDTQKSSRGFLCLKAYRLTPQAIQMYKDGDFTPEAFRTLKVGYESLFAEIPIVIKNSPLTNIMMSELNELLPEDKGHNFLDLGTATVLENQMRSLIERVDELYQEAVRYNKYQQVVFKQDTEKHRALAKLAAENAVRTSKGEPTVAEEEVIKQFRPMTAPNRLTATITSGQINTHAQHIAQFCSQSLAKLFITESLQNAKEAKETK.

Positions 22-154 constitute an MPN domain; sequence VQCDGLAVMK…LKAYRLTPQA (133 aa).

This sequence belongs to the eIF-3 subunit H family. In terms of assembly, component of the eukaryotic translation initiation factor 3 (eIF-3) complex. The eIF-3 complex interacts with pix. Interacts with mxt.

The protein localises to the cytoplasm. Its function is as follows. Component of the eukaryotic translation initiation factor 3 (eIF-3) complex, which is involved in protein synthesis of a specialized repertoire of mRNAs and, together with other initiation factors, stimulates binding of mRNA and methionyl-tRNAi to the 40S ribosome. The eIF-3 complex specifically targets and initiates translation of a subset of mRNAs involved in cell proliferation. This chain is Eukaryotic translation initiation factor 3 subunit H, found in Drosophila yakuba (Fruit fly).